A 270-amino-acid polypeptide reads, in one-letter code: Aliphatic sulfonates import ATP-binding protein SsuB 3 (270 aa).

Positions 17-238 constitute an ABC transporter domain; the sequence is LAVRKLKKAF…VRGSHRLAAL (222 aa). 49–56 contacts ATP; it reads GRSGCGKS.

It belongs to the ABC transporter superfamily. Aliphatic sulfonates importer (TC 3.A.1.17.2) family. As to quaternary structure, the complex is composed of two ATP-binding proteins (SsuB), two transmembrane proteins (SsuC) and a solute-binding protein (SsuA).

It is found in the cell inner membrane. It catalyses the reaction ATP + H2O + aliphatic sulfonate-[sulfonate-binding protein]Side 1 = ADP + phosphate + aliphatic sulfonateSide 2 + [sulfonate-binding protein]Side 1.. Part of the ABC transporter complex SsuABC involved in aliphatic sulfonates import. Responsible for energy coupling to the transport system. This is Aliphatic sulfonates import ATP-binding protein SsuB 3 from Pseudomonas syringae pv. syringae (strain B728a).